The primary structure comprises 245 residues: Chromosome partition protein MukE (245 aa).

The tract at residues 213 to 245 is disordered; sequence PESIAAEKATADDESAVSNEEDFEYDDNQEGAE. Acidic residues predominate over residues 224 to 245; it reads DDESAVSNEEDFEYDDNQEGAE.

This sequence belongs to the MukE family. In terms of assembly, interacts, and probably forms a ternary complex, with MukF and MukB. The complex formation is stimulated by calcium or magnesium.

The protein resides in the cytoplasm. It is found in the nucleoid. Functionally, involved in chromosome condensation, segregation and cell cycle progression. May participate in facilitating chromosome segregation by condensation DNA from both sides of a centrally located replisome during cell division. Probably acts via its interaction with MukB and MukF. The sequence is that of Chromosome partition protein MukE from Actinobacillus succinogenes (strain ATCC 55618 / DSM 22257 / CCUG 43843 / 130Z).